We begin with the raw amino-acid sequence, 254 residues long: Ribosomal RNA small subunit methyltransferase J (254 aa).

S-adenosyl-L-methionine is bound by residues 107–108 (RD), 123–124 (ER), and Asp-177.

This sequence belongs to the methyltransferase superfamily. RsmJ family.

The protein localises to the cytoplasm. The enzyme catalyses guanosine(1516) in 16S rRNA + S-adenosyl-L-methionine = N(2)-methylguanosine(1516) in 16S rRNA + S-adenosyl-L-homocysteine + H(+). In terms of biological role, specifically methylates the guanosine in position 1516 of 16S rRNA. The chain is Ribosomal RNA small subunit methyltransferase J from Histophilus somni (strain 129Pt) (Haemophilus somnus).